Reading from the N-terminus, the 124-residue chain is Ribonuclease pancreatic (124 aa).

Positions Lys-1–Met-13 are enriched in basic and acidic residues. The tract at residues Lys-1 to Tyr-25 is disordered. Positions 7 and 10 each coordinate substrate. The active-site Proton acceptor is the His-12. Intrachain disulfides connect Cys-26–Cys-84, Cys-40–Cys-95, Cys-58–Cys-110, and Cys-65–Cys-72. Residues Lys-41–Thr-45, Lys-66, and Arg-85 each bind substrate. His-119 serves as the catalytic Proton donor.

Belongs to the pancreatic ribonuclease family. In terms of assembly, monomer. Interacts with and forms tight 1:1 complexes with RNH1. Dimerization of two such complexes may occur. Interaction with RNH1 inhibits this protein. In terms of tissue distribution, pancreas.

Its subcellular location is the secreted. It carries out the reaction an [RNA] containing cytidine + H2O = an [RNA]-3'-cytidine-3'-phosphate + a 5'-hydroxy-ribonucleotide-3'-[RNA].. It catalyses the reaction an [RNA] containing uridine + H2O = an [RNA]-3'-uridine-3'-phosphate + a 5'-hydroxy-ribonucleotide-3'-[RNA].. Its function is as follows. Endonuclease that catalyzes the cleavage of RNA on the 3' side of pyrimidine nucleotides. Acts on single-stranded and double-stranded RNA. The sequence is that of Ribonuclease pancreatic (RNASE1) from Tragelaphus oryx (Eland).